The following is a 179-amino-acid chain: MSVVLQLTQLHQRFNDKTLKNTQKHPLMVHDEQWPSPCEIGNVDQQGNIQWQAVLQQPAGSLNDLAKALDVTFPSGLNALYGHMYGGNIQASIDGHQVELLQVWNSDDFDLLQQNITGHVLMKRKLKQPETVFIGLTAQDDLLVCVLLHSGEVCLEYVGKKTHHVLAANIEEFLQALEV.

It belongs to the Syd family.

It localises to the cell inner membrane. Its function is as follows. Interacts with the SecY protein in vivo. May bind preferentially to an uncomplexed state of SecY, thus functioning either as a chelating agent for excess SecY in the cell or as a regulatory factor that negatively controls the translocase function. The protein is Protein Syd of Pseudoalteromonas translucida (strain TAC 125).